Reading from the N-terminus, the 1236-residue chain is MGEVKWTKEQQQAIDVHGCNLLVSAAAGSGKTAVLVERIIKMITDIKNPVDIDRLLVVTFTNAAASEMKERIGKAIGKELTKHPKSKQLQRQLTLLNRASITTIHSFCLETIRNNFHYIDLDPNFRIGDETETVLLKGEIIEGIFEDLYEPENCTQEFLNLVEFYSSNKDDVALQNIVLNLYDFVMSSKNPKKQLQDMAEQFNVDESYNFGESKWAKVLMDDVELELSGLKDMMEEALKLINDTNGLDAYLEGFTDELLMINDLILNAKTSWDSLYNGLSEVKFGRLKTCRNCEDKKTQEKVKDIRNKVKKQLQDEIKKKITSYSTKEIVTDLRNLYPIMKSLCDLVIEFMDRYSKAKKERGIIDFNDFEHFCLEILGHEEVALKLRQKYIEILVDEYQDSNYVQEAIINSIARRHEETGNPINVFMVGDVKQSIYRFRQAKPELFLKKYNSYLEGENAKERKVNLFKNFRSRKEVLDGVNFIFKQIMSENIGELEYGDDEALYLGADFEQYEDKSLVGGPIELNLIEKSKDETKEEESEEEEILSNIQVEARFVAKKINELVNPKIGEPFKVYDNELKAYRNVEYRDIVVLLRSTSNWAPVFTDEMKENLIPAYADVGNGYFETVEIKTILSLLEIIDNPRQDIPLIAVLRSPIASFTPEELIDIRLENKDGDFYGGLLKVASSEDRDDNWILFKRKCNSFLEKLNYWREKSIHMPIDEFIWYLYMETGYYGYVGALAGGMQRQANLKILFQRARQYEKTSYKGLFNFINFINRLKVSSGDMGSAKILGENDNVVRIMSIHKSKGLEFPVIILSALGKNFNMQDLNKRILYHDELGFGPDYIDLDKRIIYETVPKSALKKKIKLESLSEEMRILYVALTRAKEKLILTGAVNDIEKSAKKWSYALEGEDYKLSQYQVMTGKNYLDWICPVIMRHKDGEVLRELAGIEIFEKVNLLSDESSWKITTDNISGILQNDDETNEIILEDIKEIEDIEESSSYYDEINERLNFKYKYIESSKLPTLLTVTELKRMKNSSMYEDYSRDMYTPKLVKKPMFMEKDKKLKGAEKGTAMHAVMQKINYSEELTIEDINRQMETMVEKEFITKEQADSVEAEKILNFFKSNIGKRLLKAENVRRETPFHMELKSTEIYESLPKEIYENENIMIQGIIDCYFEEEDGIVLLDYKSDYFKEGQEEAIIKKYKVQIDYYARAIEELTGKVVKEKYLYLFYGDKEVEIK.

In terms of domain architecture, UvrD-like helicase ATP-binding spans 4–473; sequence VKWTKEQQQA…VNLFKNFRSR (470 aa). 25-32 is an ATP binding site; the sequence is AAAGSGKT. Positions 512–806 constitute a UvrD-like helicase C-terminal domain; it reads YEDKSLVGGP…RIMSIHKSKG (295 aa).

This sequence belongs to the helicase family. AddA subfamily. In terms of assembly, heterodimer of AddA and AddB/RexB. The cofactor is Mg(2+).

It carries out the reaction Couples ATP hydrolysis with the unwinding of duplex DNA by translocating in the 3'-5' direction.. The enzyme catalyses ATP + H2O = ADP + phosphate + H(+). Functionally, the heterodimer acts as both an ATP-dependent DNA helicase and an ATP-dependent, dual-direction single-stranded exonuclease. Recognizes the chi site generating a DNA molecule suitable for the initiation of homologous recombination. The AddA nuclease domain is required for chi fragment generation; this subunit has the helicase and 3' -&gt; 5' nuclease activities. This chain is ATP-dependent helicase/nuclease subunit A, found in Clostridium novyi (strain NT).